The chain runs to 762 residues: Cellulose synthase-like protein H2 (762 aa).

Residues 1–15 (MAVVAAAAATGSTTR) are compositionally biased toward low complexity. Residues 1-39 (MAVVAAAAATGSTTRSGGGGGEGTRSGRKKPPPPPLQER) form a disordered region. 2 helical membrane passes run 47-67 (AWAWRLAGLAVLLLLLALLAL) and 81-101 (GVWRVALVCEAWFAALCALNV). Active-site residues include aspartate 180 and aspartate 470. 6 helical membrane-spanning segments follow: residues 541 to 561 (LAYLIVLGWPLRAPFELCYGL), 582 to 602 (FSVPLALFISYNTYNFMEYMA), 619 to 639 (IISVSAWTLAFLTVLLKSLGL), 673 to 693 (LPVFIPVTALAMLNIVAVTVG), 708 to 728 (APGIGEFMCCGWLVLCFFPFV), and 739 to 759 (GIPWSVKLKASLLVAMFVTFC).

This sequence belongs to the glycosyltransferase 2 family. Plant cellulose synthase-like H subfamily.

Its subcellular location is the golgi apparatus membrane. Thought to be a Golgi-localized beta-glycan synthase that polymerize the backbones of noncellulosic polysaccharides (hemicelluloses) of plant cell wall. The polypeptide is Cellulose synthase-like protein H2 (CSLH2) (Oryza sativa subsp. indica (Rice)).